The following is a 78-amino-acid chain: Acyl carrier protein (78 aa).

The Carrier domain maps to 2 to 77; the sequence is STIEERVKKI…AAIDYINGHQ (76 aa). Ser-37 carries the post-translational modification O-(pantetheine 4'-phosphoryl)serine.

It belongs to the acyl carrier protein (ACP) family. In terms of processing, 4'-phosphopantetheine is transferred from CoA to a specific serine of apo-ACP by AcpS. This modification is essential for activity because fatty acids are bound in thioester linkage to the sulfhydryl of the prosthetic group.

It localises to the cytoplasm. It functions in the pathway lipid metabolism; fatty acid biosynthesis. Functionally, carrier of the growing fatty acid chain in fatty acid biosynthesis. In Shigella flexneri, this protein is Acyl carrier protein.